We begin with the raw amino-acid sequence, 136 residues long: Large-conductance mechanosensitive channel (136 aa).

2 consecutive transmembrane segments (helical) span residues 10–30 (FAMR…AAFG) and 76–96 (GAFI…FIAI).

This sequence belongs to the MscL family. As to quaternary structure, homopentamer.

It is found in the cell inner membrane. In terms of biological role, channel that opens in response to stretch forces in the membrane lipid bilayer. May participate in the regulation of osmotic pressure changes within the cell. This is Large-conductance mechanosensitive channel from Pectobacterium atrosepticum (strain SCRI 1043 / ATCC BAA-672) (Erwinia carotovora subsp. atroseptica).